Here is a 472-residue protein sequence, read N- to C-terminus: Adenosylhomocysteinase (472 aa).

The substrate site is built by T64, D138, and E198. Residue 199–201 (TTT) coordinates NAD(+). Residues K228 and D232 each coordinate substrate. Residues N233, 262 to 267 (GFGDVG), E285, N320, 341 to 343 (IGH), and N386 each bind NAD(+).

Belongs to the adenosylhomocysteinase family. The cofactor is NAD(+).

The protein resides in the cytoplasm. The enzyme catalyses S-adenosyl-L-homocysteine + H2O = L-homocysteine + adenosine. The protein operates within amino-acid biosynthesis; L-homocysteine biosynthesis; L-homocysteine from S-adenosyl-L-homocysteine: step 1/1. Functionally, may play a key role in the regulation of the intracellular concentration of adenosylhomocysteine. The sequence is that of Adenosylhomocysteinase from Prochlorococcus marinus (strain MIT 9301).